The chain runs to 244 residues: Claudin-12 (244 aa).

The Cytoplasmic portion of the chain corresponds to 1–10 (MGCRDVHAAT). Residues 11 to 31 (VLSFLCGIASVAGLFAGTLLP) traverse the membrane as a helical segment. The Extracellular segment spans residues 32–87 (NWRKLRLITFNRNEKNLTVYTGLWVKCARYDGGNDCLMYDAAWYSSVDQLDLRVLQ). A helical membrane pass occupies residues 88-108 (FALPLSILIAMGALLLCLIGM). Topologically, residues 109–135 (CNTAFRSSVPNIKLAKCLVNSAGCHLV) are cytoplasmic. Residues 136–156 (AGLLFFLAGTVSLSPSIWVIF) form a helical membrane-spanning segment. The Extracellular portion of the chain corresponds to 157 to 174 (YNIHLNRKFEPVFAFDYA). The helical transmembrane segment at 175-195 (VYVTVASAGGLFMTALLLFIW) threads the bilayer. Residues 196–244 (YCACKSLPSPFWQPLYSHPPGMHTYSQPYSARSRLSAIEIDIPVVSHTT) are Cytoplasmic-facing. 2 positions are modified to phosphoserine: S228 and S231.

Belongs to the claudin family. As to quaternary structure, interacts with OCLN.

The protein localises to the cell junction. It is found in the tight junction. Its subcellular location is the cell membrane. Its function is as follows. Plays a major role in tight junction-specific obliteration of the intercellular space, through calcium-independent cell-adhesion activity. This Bos taurus (Bovine) protein is Claudin-12 (CLDN12).